A 312-amino-acid chain; its full sequence is Mycothiol acetyltransferase (312 aa).

2 consecutive N-acetyltransferase domains span residues 8–136 (PIIR…LPMP) and 149–301 (LRLD…HQDH). Glu-38 contributes to the 1D-myo-inositol 2-(L-cysteinylamino)-2-deoxy-alpha-D-glucopyranoside binding site. Acetyl-CoA is bound by residues 77-79 (LMV) and 85-90 (RQGIAT). 1D-myo-inositol 2-(L-cysteinylamino)-2-deoxy-alpha-D-glucopyranoside is bound by residues Glu-175, Lys-215, and Glu-226. Acetyl-CoA-binding positions include 230-232 (LGV) and 237-243 (EGKGVGR). Tyr-264 lines the 1D-myo-inositol 2-(L-cysteinylamino)-2-deoxy-alpha-D-glucopyranoside pocket. An acetyl-CoA-binding site is contributed by 269-274 (NERVVH). The segment at 292-312 (PAKPARHQDHGRQSSPQERDA) is disordered. A compositionally biased stretch (basic and acidic residues) spans 297–312 (RHQDHGRQSSPQERDA).

It belongs to the acetyltransferase family. MshD subfamily. Monomer.

It carries out the reaction 1D-myo-inositol 2-(L-cysteinylamino)-2-deoxy-alpha-D-glucopyranoside + acetyl-CoA = mycothiol + CoA + H(+). Its function is as follows. Catalyzes the transfer of acetyl from acetyl-CoA to desacetylmycothiol (Cys-GlcN-Ins) to form mycothiol. In Propionibacterium freudenreichii subsp. shermanii (strain ATCC 9614 / DSM 4902 / CIP 103027 / NCIMB 8099 / CIRM-BIA1), this protein is Mycothiol acetyltransferase.